We begin with the raw amino-acid sequence, 413 residues long: E3 ubiquitin ligase ICP22 (413 aa).

Residues 1–124 (MADIPPDPPA…PPRKSKRPRI (124 aa)) are disordered. Over residues 62–76 (GDLRGGRRRSPRELG) the composition is skewed to basic and acidic residues. A compositionally biased stretch (low complexity) spans 84–97 (SAESTTGTESEGTG). At Y189 the chain carries Phosphotyrosine; by host. Disordered regions lie at residues 289-334 (LETN…SASG) and 370-390 (AERSGLPAPGACRATEAPERE). Positions 297-309 (SDDEISDATDSDD) are enriched in acidic residues.

It belongs to the herpesviridae ICP22 family. In terms of processing, tyrosine phosphorylated.

The protein resides in the host nucleus. It participates in protein modification; protein ubiquitination. Functionally, functions as an E3 ubiquitin ligase and plays a role in the inhibition of innate immunity by preventing IFN-mediated signaling. Induces the ubiquitination and degradation of host STAT1, STAT2 and IRF9, resulting in the blockade of ISGF3 nuclear translocation. This chain is E3 ubiquitin ligase ICP22, found in Human herpesvirus 2 (strain HG52) (HHV-2).